Consider the following 302-residue polypeptide: Phosphatidylglycerol--prolipoprotein diacylglyceryl transferase (302 aa).

The next 3 helical transmembrane spans lie at 26-46 (WYAL…VMLV), 67-87 (LVLW…VLFY), and 108-128 (IWEG…AIVL). Arginine 156 is a binding site for a 1,2-diacyl-sn-glycero-3-phospho-(1'-sn-glycerol). 2 helical membrane passes run 231 to 251 (GALV…LEGV) and 263 to 283 (LGLT…VWLL).

The protein belongs to the Lgt family.

It localises to the cell inner membrane. It catalyses the reaction L-cysteinyl-[prolipoprotein] + a 1,2-diacyl-sn-glycero-3-phospho-(1'-sn-glycerol) = an S-1,2-diacyl-sn-glyceryl-L-cysteinyl-[prolipoprotein] + sn-glycerol 1-phosphate + H(+). The protein operates within protein modification; lipoprotein biosynthesis (diacylglyceryl transfer). Catalyzes the transfer of the diacylglyceryl group from phosphatidylglycerol to the sulfhydryl group of the N-terminal cysteine of a prolipoprotein, the first step in the formation of mature lipoproteins. The chain is Phosphatidylglycerol--prolipoprotein diacylglyceryl transferase from Caulobacter sp. (strain K31).